Consider the following 41-residue polypeptide: MANQKTYTYPIFTVRWLAIHALAVPTVFFLGSITAMQFIER.

The helical transmembrane segment at 16–32 threads the bilayer; sequence WLAIHALAVPTVFFLGS. Residue H20 participates in heme binding.

It belongs to the PsbE/PsbF family. As to quaternary structure, heterodimer of an alpha subunit and a beta subunit. PSII is composed of 1 copy each of membrane proteins PsbA, PsbB, PsbC, PsbD, PsbE, PsbF, PsbH, PsbI, PsbJ, PsbK, PsbL, PsbM, PsbT, PsbX, PsbY, PsbZ, Psb30/Ycf12, at least 3 peripheral proteins of the oxygen-evolving complex and a large number of cofactors. It forms dimeric complexes. Heme b serves as cofactor.

Its subcellular location is the plastid. It is found in the chloroplast thylakoid membrane. This b-type cytochrome is tightly associated with the reaction center of photosystem II (PSII). PSII is a light-driven water:plastoquinone oxidoreductase that uses light energy to abstract electrons from H(2)O, generating O(2) and a proton gradient subsequently used for ATP formation. It consists of a core antenna complex that captures photons, and an electron transfer chain that converts photonic excitation into a charge separation. The chain is Cytochrome b559 subunit beta from Oltmannsiellopsis viridis (Marine flagellate).